A 119-amino-acid polypeptide reads, in one-letter code: Large ribosomal subunit protein bL20 (119 aa).

Belongs to the bacterial ribosomal protein bL20 family.

Functionally, binds directly to 23S ribosomal RNA and is necessary for the in vitro assembly process of the 50S ribosomal subunit. It is not involved in the protein synthesizing functions of that subunit. The sequence is that of Large ribosomal subunit protein bL20 from Nitrosospira multiformis (strain ATCC 25196 / NCIMB 11849 / C 71).